A 527-amino-acid chain; its full sequence is Tubulin-specific chaperone E (527 aa).

Position 2 is an N-acetylserine (Ser-2). The region spanning 27 to 71 (GVVPPVAGPWLGVEWDNPERGKHDGSHEGTVYFKCRHPTGGSFIR) is the CAP-Gly domain. 7 LRR repeats span residues 154 to 175 (NIRK…IHIA), 180 to 200 (HLEV…SVLT), 205 to 226 (VLKV…RCVA), 230 to 252 (GLEE…DVLQ), 253 to 274 (TVKL…YLIA), 278 to 299 (RLEQ…DAGI), and 308 to 329 (SLKY…NELE). Residues 342–384 (NPLTKEDKEAETARLLIIASIGQLKTLNKCEILPEERRRAELD) enclose the LRRCT domain. At Lys-463 the chain carries N6-acetyllysine. Ser-495 carries the post-translational modification Phosphoserine.

Belongs to the TBCE family. As to quaternary structure, supercomplex made of cofactors A to E. Cofactors A and D function by capturing and stabilizing tubulin in a quasi-native conformation. Cofactor E binds to the cofactor D-tubulin complex; interaction with cofactor C then causes the release of tubulin polypeptides that are committed to the native state. Cofactors B and E can form a heterodimer which binds to alpha-tubulin and enhances their ability to dissociate tubulin heterodimers. Interacts with TBCD.

It localises to the cytoplasm. Its subcellular location is the cytoskeleton. In terms of biological role, tubulin-folding protein; involved in the second step of the tubulin folding pathway and in the regulation of tubulin heterodimer dissociation. Required for correct organization of microtubule cytoskeleton and mitotic splindle, and maintenance of the neuronal microtubule network. The chain is Tubulin-specific chaperone E (TBCE) from Homo sapiens (Human).